The following is a 484-amino-acid chain: Endoglucanase 9 (484 aa).

The first 21 residues, 1 to 21 (MTSLFFFVLLFSSLLISNGDA), serve as a signal peptide directing secretion. Asp-77 (nucleophile) is an active-site residue. Residues His-402, Asp-453, and Glu-462 contribute to the active site.

Belongs to the glycosyl hydrolase 9 (cellulase E) family. In terms of tissue distribution, specifically expressed in root cap cells.

The protein resides in the secreted. It is found in the cell wall. The enzyme catalyses Endohydrolysis of (1-&gt;4)-beta-D-glucosidic linkages in cellulose, lichenin and cereal beta-D-glucans.. In Arabidopsis thaliana (Mouse-ear cress), this protein is Endoglucanase 9 (CEL3).